A 39-amino-acid polypeptide reads, in one-letter code: Fuctinin-3 (39 aa).

The tract at residues 1–39 is disordered; sequence KELNSNHDGADETSEKEQQEAIEHIDEVQNEIDRLNETA.

To human SET/PHAPII protein. As to quaternary structure, oligomer.

Its subcellular location is the cytoplasm. Functionally, has a role in the physiological regulation of fucosylation processes. The sequence is that of Fuctinin-3 from Rattus norvegicus (Rat).